The following is a 215-amino-acid chain: MALLPLLDVINLGRQPYEQSWQAMTAFTNQRTPDTPDQLWLVEHPPVFTQGQAGKAEHLLFPGDIPVVQTDRGGQVTYHGPGQLVAYPLLDLRRLKMGVRDLVTAIEQTIVATLAEYGIESYPKPDAPGVYVENHKIASLGLRVRRGCSFHGLALNVDMDLSPFLRINPCGYQGLAMTQMRDLMPETPSLVQVQEQLVCQFARKLGYETCTMRAN.

Residues 33–209 (PDTPDQLWLV…QFARKLGYET (177 aa)) form the BPL/LPL catalytic domain. Substrate contacts are provided by residues 72-79 (RGGQVTYH), 139-141 (SLG), and 152-154 (GLA). Cys-170 functions as the Acyl-thioester intermediate in the catalytic mechanism.

The protein belongs to the LipB family.

Its subcellular location is the cytoplasm. The catalysed reaction is octanoyl-[ACP] + L-lysyl-[protein] = N(6)-octanoyl-L-lysyl-[protein] + holo-[ACP] + H(+). The protein operates within protein modification; protein lipoylation via endogenous pathway; protein N(6)-(lipoyl)lysine from octanoyl-[acyl-carrier-protein]: step 1/2. Catalyzes the transfer of endogenously produced octanoic acid from octanoyl-acyl-carrier-protein onto the lipoyl domains of lipoate-dependent enzymes. Lipoyl-ACP can also act as a substrate although octanoyl-ACP is likely to be the physiological substrate. The protein is Octanoyltransferase of Cellvibrio japonicus (strain Ueda107) (Pseudomonas fluorescens subsp. cellulosa).